A 208-amino-acid chain; its full sequence is FMN-dependent NADH:quinone oxidoreductase 4 (208 aa).

It belongs to the azoreductase type 1 family. As to quaternary structure, homodimer. The cofactor is FMN.

It catalyses the reaction 2 a quinone + NADH + H(+) = 2 a 1,4-benzosemiquinone + NAD(+). The enzyme catalyses N,N-dimethyl-1,4-phenylenediamine + anthranilate + 2 NAD(+) = 2-(4-dimethylaminophenyl)diazenylbenzoate + 2 NADH + 2 H(+). In terms of biological role, quinone reductase that provides resistance to thiol-specific stress caused by electrophilic quinones. Functionally, also exhibits azoreductase activity. Catalyzes the reductive cleavage of the azo bond in aromatic azo compounds to the corresponding amines. This is FMN-dependent NADH:quinone oxidoreductase 4 from Bacillus cereus (strain ATCC 10987 / NRS 248).